We begin with the raw amino-acid sequence, 165 residues long: Lipoprotein signal peptidase (165 aa).

Helical transmembrane passes span Pro-9 to Val-29, Trp-65 to Leu-85, and Thr-97 to Val-119. Active-site residues include Asp-121 and Asp-139. A helical transmembrane segment spans residues Val-134–Phe-154.

Belongs to the peptidase A8 family.

Its subcellular location is the cell inner membrane. The enzyme catalyses Release of signal peptides from bacterial membrane prolipoproteins. Hydrolyzes -Xaa-Yaa-Zaa-|-(S,diacylglyceryl)Cys-, in which Xaa is hydrophobic (preferably Leu), and Yaa (Ala or Ser) and Zaa (Gly or Ala) have small, neutral side chains.. Its pathway is protein modification; lipoprotein biosynthesis (signal peptide cleavage). Its function is as follows. This protein specifically catalyzes the removal of signal peptides from prolipoproteins. This Histophilus somni (strain 129Pt) (Haemophilus somnus) protein is Lipoprotein signal peptidase.